The following is a 253-amino-acid chain: Ubiquinone/menaquinone biosynthesis C-methyltransferase UbiE (253 aa).

Residues Thr76, Asp97, and 125 to 126 (NA) contribute to the S-adenosyl-L-methionine site.

It belongs to the class I-like SAM-binding methyltransferase superfamily. MenG/UbiE family.

It catalyses the reaction a 2-demethylmenaquinol + S-adenosyl-L-methionine = a menaquinol + S-adenosyl-L-homocysteine + H(+). The catalysed reaction is a 2-methoxy-6-(all-trans-polyprenyl)benzene-1,4-diol + S-adenosyl-L-methionine = a 5-methoxy-2-methyl-3-(all-trans-polyprenyl)benzene-1,4-diol + S-adenosyl-L-homocysteine + H(+). The protein operates within quinol/quinone metabolism; menaquinone biosynthesis; menaquinol from 1,4-dihydroxy-2-naphthoate: step 2/2. It functions in the pathway cofactor biosynthesis; ubiquinone biosynthesis. Its function is as follows. Methyltransferase required for the conversion of demethylmenaquinol (DMKH2) to menaquinol (MKH2) and the conversion of 2-polyprenyl-6-methoxy-1,4-benzoquinol (DDMQH2) to 2-polyprenyl-3-methyl-6-methoxy-1,4-benzoquinol (DMQH2). In Stenotrophomonas maltophilia (strain K279a), this protein is Ubiquinone/menaquinone biosynthesis C-methyltransferase UbiE.